Reading from the N-terminus, the 338-residue chain is N-acetyl-gamma-glutamyl-phosphate reductase (338 aa).

Residue C148 is part of the active site.

Belongs to the NAGSA dehydrogenase family. Type 1 subfamily.

Its subcellular location is the cytoplasm. It carries out the reaction N-acetyl-L-glutamate 5-semialdehyde + phosphate + NADP(+) = N-acetyl-L-glutamyl 5-phosphate + NADPH + H(+). It functions in the pathway amino-acid biosynthesis; L-arginine biosynthesis; N(2)-acetyl-L-ornithine from L-glutamate: step 3/4. Catalyzes the NADPH-dependent reduction of N-acetyl-5-glutamyl phosphate to yield N-acetyl-L-glutamate 5-semialdehyde. This is N-acetyl-gamma-glutamyl-phosphate reductase from Leptospira borgpetersenii serovar Hardjo-bovis (strain JB197).